The primary structure comprises 700 residues: Elongation factor G (700 aa).

The tr-type G domain occupies 6–286 (HKVRNIGIMA…AVIDYLPSPL (281 aa)). Residues 15–22 (AHIDAGKT), 79–83 (DTPGH), and 133–136 (NKMD) contribute to the GTP site.

The protein belongs to the TRAFAC class translation factor GTPase superfamily. Classic translation factor GTPase family. EF-G/EF-2 subfamily.

It localises to the cytoplasm. Functionally, catalyzes the GTP-dependent ribosomal translocation step during translation elongation. During this step, the ribosome changes from the pre-translocational (PRE) to the post-translocational (POST) state as the newly formed A-site-bound peptidyl-tRNA and P-site-bound deacylated tRNA move to the P and E sites, respectively. Catalyzes the coordinated movement of the two tRNA molecules, the mRNA and conformational changes in the ribosome. This chain is Elongation factor G, found in Leifsonia xyli subsp. xyli (strain CTCB07).